Consider the following 177-residue polypeptide: Meiotic chromosome segregation protein C17A2.07c (177 aa).

Positions 71–90 (EDDSINKPTEEADEAPRTQL) are disordered. Basic and acidic residues predominate over residues 74-86 (SINKPTEEADEAP).

The protein localises to the nucleus. In terms of biological role, involved in meiotic chromosome segregation. In Schizosaccharomyces pombe (strain 972 / ATCC 24843) (Fission yeast), this protein is Meiotic chromosome segregation protein C17A2.07c.